We begin with the raw amino-acid sequence, 70 residues long: Large ribosomal subunit protein uL29 (70 aa).

This sequence belongs to the universal ribosomal protein uL29 family.

This chain is Large ribosomal subunit protein uL29, found in Clostridium botulinum (strain Eklund 17B / Type B).